Consider the following 506-residue polypeptide: Sucrose transport protein SUT3 (506 aa).

At 1-20 (MAVDMELDGGGDGKGKAPPQ) the chain is on the cytoplasmic side. Residues 21 to 41 (ISLSGLFLACMVAGGVQYGWA) traverse the membrane as a helical segment. Residues 42 to 54 (LQLSLLTPYVQTL) are Extracellular-facing. The helical transmembrane segment at 55-75 (GIPHALTSVMWLCGPIAGLIV) threads the bilayer. Topologically, residues 76–94 (QPCVGLYSDKCTSSLGRRR) are cytoplasmic. A helical membrane pass occupies residues 95–115 (PFILTGCIIICISVIVIGFSS). Over 116–135 (DIGYALGDTTEDCKVYRGPR) the chain is Extracellular. Residues 136–156 (YHAAAAFILGFWLLDFSNNTV) traverse the membrane as a helical segment. Residues 157 to 171 (QGPARALMADLSGRH) are Cytoplasmic-facing. Residues 172–192 (GPSAANAIFCSWMALGNILGY) traverse the membrane as a helical segment. The Extracellular segment spans residues 193–220 (SSGSTNDWHKWFPFLMTRACCEACANLK). The helical transmembrane segment at 221–241 (AAFLVAVVFLGLSTAVTMVFA) threads the bilayer. Residues 242-275 (REVALDPVAAAKRNEGEASGLLAVFKGMKNLPVG) are Cytoplasmic-facing. A helical membrane pass occupies residues 276–296 (MPSVLIVTGLTWLSWFPFILF). Residues 297 to 327 (DTDWMGREIYHGRPDGSPAEVTAFQEGVRQG) are Extracellular-facing. A helical membrane pass occupies residues 328–348 (AFGLLLNSIVLGISSFLIEPM). Topologically, residues 349 to 355 (CRRLGAR) are cytoplasmic. Residues 356–376 (AVWVMSSAVVCVAMAAVSVLS) traverse the membrane as a helical segment. Residues 377-404 (AWSLGDFGGSVQDAARAPAEEGGVRASA) lie on the Extracellular side of the membrane. The chain crosses the membrane as a helical span at residues 405–425 (LALFVFLGLPFAVLCSVPFAV). The Cytoplasmic segment spans residues 426–441 (TAQLAASRGGGQGLCT). Residues 442 to 462 (GVLNISIVVPQMAIALGAGPW) form a helical membrane-spanning segment. The Extracellular segment spans residues 463-470 (DELFGEGN). The helical transmembrane segment at 471–491 (IPAFAMASVFAAAAAAAGVVL) threads the bilayer. The Cytoplasmic segment spans residues 492 to 506 (LPKVSVRSVSMAGGH).

Belongs to the glycoside-pentoside-hexuronide (GPH) cation symporter transporter (TC 2.A.2.4) family. In terms of assembly, homodimer. Widely expressed. Highest expression in sink leaves and lowest in germinating seeds.

Its subcellular location is the cell membrane. Its pathway is glycan biosynthesis; sucrose metabolism. In terms of biological role, responsible for the transport of sucrose into the cell, with the concomitant uptake of protons (symport system). May also transport other glucosides. This is Sucrose transport protein SUT3 (SUT3) from Oryza sativa subsp. japonica (Rice).